Here is a 209-residue protein sequence, read N- to C-terminus: Chloramphenicol acetyltransferase (209 aa).

Histidine 189 serves as the catalytic Proton acceptor.

Belongs to the chloramphenicol acetyltransferase family. In terms of assembly, homotrimer.

It carries out the reaction chloramphenicol + acetyl-CoA = chloramphenicol 3-acetate + CoA. This enzyme is an effector of chloramphenicol resistance in bacteria. The chain is Chloramphenicol acetyltransferase from Staphylococcus aureus.